The chain runs to 689 residues: Translation initiation factor IF-2 (689 aa).

The segment at 41-109 (DYERVFGGGN…EAPAAEEREA (69 aa)) is disordered. Positions 61–70 (RKGRQKKRRR) are enriched in basic residues. Positions 80–94 (RGPRAAAPSRPSRGR) are enriched in low complexity. A compositionally biased stretch (basic and acidic residues) spans 96–109 (AAREEAPAAEEREA). The region spanning 192 to 361 (EKPPVITVMG…LVVAELEELR (170 aa)) is the tr-type G domain. The tract at residues 201–208 (GHVDHGKT) is G1. Position 201–208 (201–208 (GHVDHGKT)) interacts with GTP. The segment at 226 to 230 (GITQH) is G2. The segment at 247–250 (DTPG) is G3. Residues 247–251 (DTPGH) and 301–304 (NKID) contribute to the GTP site. Residues 301–304 (NKID) are G4. The G5 stretch occupies residues 337–339 (SAK).

This sequence belongs to the TRAFAC class translation factor GTPase superfamily. Classic translation factor GTPase family. IF-2 subfamily.

It is found in the cytoplasm. One of the essential components for the initiation of protein synthesis. Protects formylmethionyl-tRNA from spontaneous hydrolysis and promotes its binding to the 30S ribosomal subunits. Also involved in the hydrolysis of GTP during the formation of the 70S ribosomal complex. The sequence is that of Translation initiation factor IF-2 from Rubrobacter xylanophilus (strain DSM 9941 / JCM 11954 / NBRC 16129 / PRD-1).